The primary structure comprises 176 residues: Ribosome maturation factor RimM (176 aa).

The PRC barrel domain occupies 100-173 (EGEFHLLDLV…WLRLTPPPGL (74 aa)).

Belongs to the RimM family. In terms of assembly, binds ribosomal protein uS19.

It localises to the cytoplasm. Its function is as follows. An accessory protein needed during the final step in the assembly of 30S ribosomal subunit, possibly for assembly of the head region. Essential for efficient processing of 16S rRNA. May be needed both before and after RbfA during the maturation of 16S rRNA. It has affinity for free ribosomal 30S subunits but not for 70S ribosomes. This is Ribosome maturation factor RimM from Prochlorococcus marinus (strain MIT 9303).